A 284-amino-acid polypeptide reads, in one-letter code: Sulfotransferase 2A6 (284 aa).

43-48 contributes to the 3'-phosphoadenylyl sulfate binding site; it reads KSGTNW. Histidine 98 serves as the catalytic Proton acceptor. 3'-phosphoadenylyl sulfate is bound by residues arginine 120, serine 128, tyrosine 183, 217-222, and 246-248; these read SSFQVM and RNG.

It belongs to the sulfotransferase 1 family. Oligomer. As to expression, liver, exhibiting a sex-dependent spatial localization in the lobule of the liver.

The protein resides in the cytoplasm. It localises to the cytosol. It catalyses the reaction an alcohol + 3'-phosphoadenylyl sulfate = an alkyl sulfate + adenosine 3',5'-bisphosphate + H(+). It carries out the reaction glycolithocholate + 3'-phosphoadenylyl sulfate = sulfoglycolithocholate + adenosine 3',5'-bisphosphate + H(+). The enzyme catalyses taurolithocholate + 3'-phosphoadenylyl sulfate = taurolithocholate 3-sulfate + adenosine 3',5'-bisphosphate + H(+). The catalysed reaction is 3beta-hydroxyandrost-5-en-17-one + 3'-phosphoadenylyl sulfate = dehydroepiandrosterone 3-sulfate + adenosine 3',5'-bisphosphate + H(+). It catalyses the reaction 3beta-hydroxy-5-cholenate + 3'-phosphoadenylyl sulfate = 3beta-sulfo-5-cholenate + adenosine 3',5'-bisphosphate + H(+). It carries out the reaction deoxycholate + 3'-phosphoadenylyl sulfate = 3alpha-sulfodeoxycholate + adenosine 3',5'-bisphosphate + H(+). The enzyme catalyses glycodeoxycholate + 3'-phosphoadenylyl sulfate = 3alpha-sulfoglycodeoxycholate + adenosine 3',5'-bisphosphate + H(+). The catalysed reaction is taurodeoxycholate + 3'-phosphoadenylyl sulfate = 3alpha-sulfotaurodeoxycholate + adenosine 3',5'-bisphosphate + H(+). Functionally, sulfotransferase that utilizes 3'-phospho-5'-adenylyl sulfate (PAPS) as sulfonate donor to catalyze the sulfonation of the hydroxyl group of hydroxysteroids and bile acids. Prefered substrates are dehydroepiandrosterone (DHEA, also known as 3beta-hydroxyandrost-5-en-17-one) and 3beta-hydroxy-5-cholenoate, but can also catalyze deoxycholate and its conjugates, and lithocholate conjugates, in vitro. This Rattus norvegicus (Rat) protein is Sulfotransferase 2A6.